The primary structure comprises 254 residues: 7-cyano-7-deazaguanine synthase (254 aa).

Residue 30 to 40 (YSGGQDSATCL) coordinates ATP. Residues Cys-218, Cys-233, Cys-236, and Cys-239 each coordinate Zn(2+).

It belongs to the QueC family. Zn(2+) is required as a cofactor.

It carries out the reaction 7-carboxy-7-deazaguanine + NH4(+) + ATP = 7-cyano-7-deazaguanine + ADP + phosphate + H2O + H(+). Its pathway is purine metabolism; 7-cyano-7-deazaguanine biosynthesis. In terms of biological role, catalyzes the ATP-dependent conversion of 7-carboxy-7-deazaguanine (CDG) to 7-cyano-7-deazaguanine (preQ(0)). The protein is 7-cyano-7-deazaguanine synthase of Zymomonas mobilis subsp. mobilis (strain ATCC 31821 / ZM4 / CP4).